A 451-amino-acid polypeptide reads, in one-letter code: Zinc finger MYND domain-containing protein 10 homolog (451 aa).

The Zn(2+) site is built by Cys412, Cys415, Cys423, Cys426, Cys432, Cys436, His444, and Cys448. An MYND-type zinc finger spans residues 412–448 (CATCQAKAKKKCACCKKVHYCSRDCQLKDWPQHKLVC).

It belongs to the ZMYND10 family. As to expression, specifically expressed in cells with flagella and motile cilia: chordotonal sensory neurons and sperm.

The protein resides in the cytoplasm. It localises to the cell projection. Its subcellular location is the cilium. It is found in the dynein axonemal particle. Functionally, plays a role in axonemal structure organization and motility. May be involved in axonemal pre-assembly of inner and outer dynein arms (IDA and ODA, respectively) for proper axoneme building for cilia motility. The chain is Zinc finger MYND domain-containing protein 10 homolog from Drosophila melanogaster (Fruit fly).